The following is a 547-amino-acid chain: uncharacterized protein (547 aa).

12 helical membrane-spanning segments follow: residues 33 to 53 (PTFF…IMVI), 107 to 127 (PLIV…GVIF), 145 to 165 (TGLI…LSFA), 203 to 223 (VYIL…FYLA), 231 to 251 (FIAI…FLLV), 263 to 283 (VAGI…LIYL), 298 to 318 (LNKI…ASFF), 351 to 371 (TLLT…FGLL), 397 to 417 (TVII…VAFG), 432 to 452 (LDLA…VATG), 470 to 490 (IVSL…FQAI), and 499 to 519 (VFIW…IAFG).

The protein localises to the cell membrane. This is an uncharacterized protein from Mycoplasma genitalium (strain ATCC 33530 / DSM 19775 / NCTC 10195 / G37) (Mycoplasmoides genitalium).